The chain runs to 454 residues: MQATPRPLALIVLAAGAGTRMNSDLPKPLHTLGSAPLVAHTIAAGASLEPARLVVITGHGADEVEAVLQDIAPEAVTARQTPQLGTGHAVLQAAAALEGFEGDAMVLYGDSPFFTSETLQAMRIARAAHDVVMLGFRPADPGRYGRLVMDGDTLRKIVEFKDATPEEREITFCNSGVLCADAATLMTLLAQLTNDNAAGEYYLTDVPELAGNAGLTATAIACDEAETIGINSRAELVRAEAQFQSQRRAALIEAGVTMQAPDSVHFALDTHIGRDAVIEPYVVFGADVTVESGAQIRAFSHLEGCHISAGAIVGPYARLRPGAEIGNNAKVGNFVEVKAADIAEGAKVNHLSYIGDATVGERANIGAGTVTCNYDGVMKHRTDIGADAFIGSDTMLVAPVTVGAGAMTASGSTITEDVPDGALALGRAKQVNKPGLATKLRARLKAIKDAKSKD.

The interval 1–233 (MQATPRPLAL…EAETIGINSR (233 aa)) is pyrophosphorylase. UDP-N-acetyl-alpha-D-glucosamine contacts are provided by residues 13 to 16 (LAAG), Lys27, Gln80, 85 to 86 (GT), 108 to 110 (YGD), Gly145, Glu159, Asn174, and Asn231. Mg(2+) is bound at residue Asp110. Asn231 lines the Mg(2+) pocket. A linker region spans residues 234–254 (AELVRAEAQFQSQRRAALIEA). The segment at 255-454 (GVTMQAPDSV…KAIKDAKSKD (200 aa)) is N-acetyltransferase. UDP-N-acetyl-alpha-D-glucosamine-binding residues include Arg320 and Lys338. The active-site Proton acceptor is His350. The UDP-N-acetyl-alpha-D-glucosamine site is built by Tyr353 and Asn364. Acetyl-CoA is bound by residues Ala367, 373–374 (NY), Ser392, Ser410, and Arg427.

In the N-terminal section; belongs to the N-acetylglucosamine-1-phosphate uridyltransferase family. The protein in the C-terminal section; belongs to the transferase hexapeptide repeat family. As to quaternary structure, homotrimer. Mg(2+) is required as a cofactor.

It is found in the cytoplasm. The enzyme catalyses alpha-D-glucosamine 1-phosphate + acetyl-CoA = N-acetyl-alpha-D-glucosamine 1-phosphate + CoA + H(+). It carries out the reaction N-acetyl-alpha-D-glucosamine 1-phosphate + UTP + H(+) = UDP-N-acetyl-alpha-D-glucosamine + diphosphate. Its pathway is nucleotide-sugar biosynthesis; UDP-N-acetyl-alpha-D-glucosamine biosynthesis; N-acetyl-alpha-D-glucosamine 1-phosphate from alpha-D-glucosamine 6-phosphate (route II): step 2/2. The protein operates within nucleotide-sugar biosynthesis; UDP-N-acetyl-alpha-D-glucosamine biosynthesis; UDP-N-acetyl-alpha-D-glucosamine from N-acetyl-alpha-D-glucosamine 1-phosphate: step 1/1. It participates in bacterial outer membrane biogenesis; LPS lipid A biosynthesis. Its function is as follows. Catalyzes the last two sequential reactions in the de novo biosynthetic pathway for UDP-N-acetylglucosamine (UDP-GlcNAc). The C-terminal domain catalyzes the transfer of acetyl group from acetyl coenzyme A to glucosamine-1-phosphate (GlcN-1-P) to produce N-acetylglucosamine-1-phosphate (GlcNAc-1-P), which is converted into UDP-GlcNAc by the transfer of uridine 5-monophosphate (from uridine 5-triphosphate), a reaction catalyzed by the N-terminal domain. This Jannaschia sp. (strain CCS1) protein is Bifunctional protein GlmU.